Consider the following 483-residue polypeptide: Glutamyl-tRNA(Gln) amidotransferase subunit A (483 aa).

Catalysis depends on charge relay system residues Lys76 and Ser151. Ser175 serves as the catalytic Acyl-ester intermediate.

It belongs to the amidase family. GatA subfamily. In terms of assembly, heterotrimer of A, B and C subunits.

The enzyme catalyses L-glutamyl-tRNA(Gln) + L-glutamine + ATP + H2O = L-glutaminyl-tRNA(Gln) + L-glutamate + ADP + phosphate + H(+). Allows the formation of correctly charged Gln-tRNA(Gln) through the transamidation of misacylated Glu-tRNA(Gln) in organisms which lack glutaminyl-tRNA synthetase. The reaction takes place in the presence of glutamine and ATP through an activated gamma-phospho-Glu-tRNA(Gln). The chain is Glutamyl-tRNA(Gln) amidotransferase subunit A from Pseudomonas fluorescens (strain ATCC BAA-477 / NRRL B-23932 / Pf-5).